A 96-amino-acid chain; its full sequence is DNA/RNA-binding protein Alba (96 aa).

Belongs to the histone-like Alba family.

It is found in the cytoplasm. Its subcellular location is the chromosome. Binds double-stranded DNA tightly but without sequence specificity. Involved in DNA compaction. In Methanocella arvoryzae (strain DSM 22066 / NBRC 105507 / MRE50), this protein is DNA/RNA-binding protein Alba.